A 403-amino-acid polypeptide reads, in one-letter code: Protein-glutamate methylesterase/protein-glutamine glutaminase (403 aa).

The Response regulatory domain maps to 8-126 (AVLIVDDSAL…SAHLRTVSRK (119 aa)). Asp59 carries the post-translational modification 4-aspartylphosphate. The 190-residue stretch at 204 to 393 (PLRESGALQI…VSLDDMAATI (190 aa)) folds into the CheB-type methylesterase domain. Catalysis depends on residues Ser219, His246, and Asp342.

It belongs to the CheB family. In terms of processing, phosphorylated by CheA. Phosphorylation of the N-terminal regulatory domain activates the methylesterase activity.

The protein localises to the cytoplasm. It carries out the reaction [protein]-L-glutamate 5-O-methyl ester + H2O = L-glutamyl-[protein] + methanol + H(+). The enzyme catalyses L-glutaminyl-[protein] + H2O = L-glutamyl-[protein] + NH4(+). In terms of biological role, involved in chemotaxis. Part of a chemotaxis signal transduction system that modulates chemotaxis in response to various stimuli. Catalyzes the demethylation of specific methylglutamate residues introduced into the chemoreceptors (methyl-accepting chemotaxis proteins or MCP) by CheR. Also mediates the irreversible deamidation of specific glutamine residues to glutamic acid. The polypeptide is Protein-glutamate methylesterase/protein-glutamine glutaminase (Treponema pallidum (strain Nichols)).